The following is a 101-amino-acid chain: Urease subunit beta (101 aa).

Belongs to the urease beta subunit family. As to quaternary structure, heterotrimer of UreA (gamma), UreB (beta) and UreC (alpha) subunits. Three heterotrimers associate to form the active enzyme.

The protein resides in the cytoplasm. The enzyme catalyses urea + 2 H2O + H(+) = hydrogencarbonate + 2 NH4(+). It functions in the pathway nitrogen metabolism; urea degradation; CO(2) and NH(3) from urea (urease route): step 1/1. The protein is Urease subunit beta of Agrobacterium fabrum (strain C58 / ATCC 33970) (Agrobacterium tumefaciens (strain C58)).